A 944-amino-acid polypeptide reads, in one-letter code: E3 ubiquitin-protein ligase JMJ24 (944 aa).

Disordered regions lie at residues 20–40 and 77–103; these read QTRS…GIPD and ANSA…YSEG. The WRC domain maps to 38-83; that stretch reads IPDDLRCKRSDGKQWRCTAMSMADKTVCEKHYIQAKKRAANSAFRA. The Nuclear localization signal 1 signature appears at 73 to 80; it reads KKRAANSA. The PHD-type; atypical zinc finger occupies 217-269; that stretch reads GEICHQCQRKDRERIISCLKCNQRAFCHNCLSARYSEISLEEVEKVCPACRGL. The Zn(2+) site is built by Cys-220, Cys-223, Cys-234, Cys-237, Cys-243, Cys-246, Cys-263, and Cys-266. Positions 323–330 match the Nuclear localization signal 2 motif; it reads EKRLREVE. The JmjC domain occupies 621–873; the sequence is PRLGLLNVAA…ESARLAEEIR (253 aa). A compositionally biased stretch (basic and acidic residues) spans 685 to 703; it reads ERVRKTKPVPEEPDQKMSE. Residues 685–715 are disordered; sequence ERVRKTKPVPEEPDQKMSENESLLSPEQKLR.

Belongs to the JARID1 histone demethylase family. Homodimer. Interacts with RDR2. Binds to CMT3. Associates with the E2 ubiquitin-conjugating enzyme UBC10. Self-ubiquitinates. Expressed in inflorescences, flowers, roots, siliques, leaves and stems, especially in the vasculature (mainly phloem), with highest levels in floral organs.

The protein localises to the nucleus. The catalysed reaction is S-ubiquitinyl-[E2 ubiquitin-conjugating enzyme]-L-cysteine + [acceptor protein]-L-lysine = [E2 ubiquitin-conjugating enzyme]-L-cysteine + N(6)-ubiquitinyl-[acceptor protein]-L-lysine.. Functionally, binds histone H3 but seems to have lost demethylase activity probably due to its inability to bind iron Fe(2+). Possesses E3 ubiquitin ligase activity and targets directly CMT3 for proteasomal degradation to initiate destabilization of the heterochromatic state (e.g. CHG cytosine methylation and H3K9me2) of endogenous silenced loci. Required for the removal of repressive H3K9me2 histone marks to facilitate the transcription of AtSN1, AtMu1c, solo LTR and SDC, thus counteracting their transcriptional silencing. Mainly required to promote the basal level transcription of silenced loci such as TE and repeats targeted by RNA-dependent DNA methylation (RdDM) for silencing, a specialized branch of the RNA interference (RNAi) pathway. Also cooperates with RNAi pathways for gene silencing both by contributing to the production of 24-nt siRNA to initiate RdDM and by recruiting RDR2 to enable local transcripts to make dsRNA. Antagonizes histone H3K9 demethylase IBM1/JMJ25 function. This chain is E3 ubiquitin-protein ligase JMJ24, found in Arabidopsis thaliana (Mouse-ear cress).